Here is a 157-residue protein sequence, read N- to C-terminus: Large ribosomal subunit protein uL22 (157 aa).

This sequence belongs to the universal ribosomal protein uL22 family. In terms of assembly, part of the 50S ribosomal subunit.

In terms of biological role, this protein binds specifically to 23S rRNA. It makes multiple contacts with different domains of the 23S rRNA in the assembled 50S subunit and ribosome. Its function is as follows. The globular domain of the protein is located near the polypeptide exit tunnel on the outside of the subunit, while an extended beta-hairpin is found that lines the wall of the exit tunnel in the center of the 70S ribosome. The chain is Large ribosomal subunit protein uL22 from Methanocorpusculum labreanum (strain ATCC 43576 / DSM 4855 / Z).